Consider the following 216-residue polypeptide: Protein-L-isoaspartate O-methyltransferase (216 aa).

The active site involves serine 66.

This sequence belongs to the methyltransferase superfamily. L-isoaspartyl/D-aspartyl protein methyltransferase family.

Its subcellular location is the cytoplasm. The catalysed reaction is [protein]-L-isoaspartate + S-adenosyl-L-methionine = [protein]-L-isoaspartate alpha-methyl ester + S-adenosyl-L-homocysteine. Its function is as follows. Catalyzes the methyl esterification of L-isoaspartyl residues in peptides and proteins that result from spontaneous decomposition of normal L-aspartyl and L-asparaginyl residues. It plays a role in the repair and/or degradation of damaged proteins. This is Protein-L-isoaspartate O-methyltransferase from Colwellia psychrerythraea (strain 34H / ATCC BAA-681) (Vibrio psychroerythus).